A 208-amino-acid polypeptide reads, in one-letter code: Small ribosomal subunit protein uS4 (208 aa).

The region spanning 97–158 (TRLDNVIYRM…RAQKYLCVQE (62 aa)) is the S4 RNA-binding domain.

Belongs to the universal ribosomal protein uS4 family. As to quaternary structure, part of the 30S ribosomal subunit. Contacts protein S5. The interaction surface between S4 and S5 is involved in control of translational fidelity.

One of the primary rRNA binding proteins, it binds directly to 16S rRNA where it nucleates assembly of the body of the 30S subunit. In terms of biological role, with S5 and S12 plays an important role in translational accuracy. The polypeptide is Small ribosomal subunit protein uS4 (Xylella fastidiosa (strain M23)).